The primary structure comprises 299 residues: Protein LacX, chromosomal (299 aa).

This chain is Protein LacX, chromosomal (lacX), found in Lactococcus lactis subsp. lactis (Streptococcus lactis).